The chain runs to 321 residues: Tyrosine recombinase XerC (321 aa).

Residues 16 to 107 (SDIGQQIVRW…GLRSFARFLE (92 aa)) form the Core-binding (CB) domain. The Tyr recombinase domain occupies 128 to 315 (SVPKPIHMSA…DSERLLDVYR (188 aa)). Active-site residues include R173, K199, H267, R270, and H293. Y302 (O-(3'-phospho-DNA)-tyrosine intermediate) is an active-site residue.

This sequence belongs to the 'phage' integrase family. XerC subfamily. In terms of assembly, forms a cyclic heterotetrameric complex composed of two molecules of XerC and two molecules of XerD.

It is found in the cytoplasm. In terms of biological role, site-specific tyrosine recombinase, which acts by catalyzing the cutting and rejoining of the recombining DNA molecules. The XerC-XerD complex is essential to convert dimers of the bacterial chromosome into monomers to permit their segregation at cell division. It also contributes to the segregational stability of plasmids. The protein is Tyrosine recombinase XerC of Nitrobacter winogradskyi (strain ATCC 25391 / DSM 10237 / CIP 104748 / NCIMB 11846 / Nb-255).